We begin with the raw amino-acid sequence, 172 residues long: Signal peptidase complex catalytic subunit SEC11 (172 aa).

Residues 1–14 are Cytoplasmic-facing; it reads MLSSLQNPRQAAAQ. Residues 15 to 35 traverse the membrane as a helical; Signal-anchor for type II membrane protein segment; sequence LMNFGLILSTAFMMWKGLSVI. At 36–172 the chain is on the lumenal side; it reads TDSPSPIVVV…MGLVVVLQRE (137 aa). Catalysis depends on charge relay system residues S49, H90, and D115. The segment at 158–169 is C-terminal short (CTS) helix; the sequence is VMLGIMGLVVVL.

The protein belongs to the peptidase S26B family. As to quaternary structure, component of the signal peptidase complex (SPC) composed of a catalytic subunit SEC11 and three accessory subunits SPC1, SPC2 and SPC3. The complex induces a local thinning of the ER membrane which is used to measure the length of the signal peptide (SP) h-region of protein substrates. This ensures the selectivity of the complex towards h-regions shorter than 18-20 amino acids. SPC associates with the translocon complex.

It localises to the endoplasmic reticulum membrane. It carries out the reaction Cleavage of hydrophobic, N-terminal signal or leader sequences from secreted and periplasmic proteins.. In terms of biological role, catalytic component of the signal peptidase complex (SPC) which catalyzes the cleavage of N-terminal signal sequences from nascent proteins as they are translocated into the lumen of the endoplasmic reticulum. Specifically cleaves N-terminal signal peptides that contain a hydrophobic alpha-helix (h-region) shorter than 18-20 amino acids. The sequence is that of Signal peptidase complex catalytic subunit SEC11 (SEC11) from Chaetomium globosum (strain ATCC 6205 / CBS 148.51 / DSM 1962 / NBRC 6347 / NRRL 1970) (Soil fungus).